Here is an 87-residue protein sequence, read N- to C-terminus: Large ribosomal subunit protein eL31 (87 aa).

The protein belongs to the eukaryotic ribosomal protein eL31 family.

The sequence is that of Large ribosomal subunit protein eL31 from Methanosphaerula palustris (strain ATCC BAA-1556 / DSM 19958 / E1-9c).